A 1052-amino-acid polypeptide reads, in one-letter code: MAAQEWDWFQREELIGQISDIRVQNLQVERENVQKRTFTRWINLHLEKCDPPLEVTDLFVDIQDGKILMALLEVLSGRNLLHEYKSSSHRIFRLNNIAKALKFLEDSNVKLVSIDAAEIADGNPSLVLGLIWNIILFFQIKELTGNLSRSSPSSSLSPGSGGTDSDSSYPPTPTTERSVAVAVKDQRKAIKTLLSWVQRKTRKYGVAVQDFAGSWRSGLAFLAVIKAIDPSLVDMKQALEDSTRDNLEKAFSIAHDSLHIPRLLEPEDIMVDMPDEQSIVTYVAQFLERFPELEPEDFVNPDKEAPIESTFVRIKESPSEQGSRVLLLSENGERAYTVNQETSYPPPDKVFVCDQLESPTGFCLDSAPSHKLSDSSTEFMHEIIDQVLQGSTGKTGSIAEPTPESSILSTRKDGRRSNSLPVKKTVHFEADLHKDASCSKDPFYSSDFRFEGSPKATKELSKQDGHVSLAEVSKEKKKSEQEARLVLEAASDKVPESTVDGLDAVPQDAQPSQDSSFCNGTVESPSSQGEKGPPPSSPGDHTLLANSTELKVQLLTVEPMDKEDYFECIPLKASKFNRDLVDFASTSQAFGEDPSSHEKTRGEEEGSENHAEKPGKRKSKSPRAETEAAESRLEPKKLEPPPKDPEQEDQGHALPPETPADKKPKVYEKAKRKSTRHHSEEEGEAESGFSAVCEEEIPSAPPSTSVSLETLRSHSEEGLDFKPSPPLSKISVIPHDLFYYPHYEVPLAAVLEAYAEGGEDLKSEDTDLEHPEDSYLQDSREEEADEDEEEAQSSQSSCSFSLPVDNSYPSVSEHVSHVDGSSEGPTSALGPGSPPSHEDHQPKETKENGPVESQQSQEPPNPELPTKPLEEKLTEASTSSKKKEKRKHMDHVESSLFIAPGTVRSSDDLEENSSEHKVPSRNSHSDSSIYIRRHTNRSLELDHFSYVQLRNAADLDDRRNRVLNRYNSQKLTELILQFYGIRADMKREYKHARLSMTGTNSSGEAVPLGNQSPPNDSLTQFVQQPDVIYFILFLWLLVYCLLLFPQLDVSRL.

The segment at 1 to 288 is actin-binding; sequence MAAQEWDWFQ…IVTYVAQFLE (288 aa). Residues 32–139 form the Calponin-homology (CH) 1 domain; it reads NVQKRTFTRW…LIWNIILFFQ (108 aa). Residues 148–168 are compositionally biased toward low complexity; that stretch reads SRSSPSSSLSPGSGGTDSDSS. The interval 148-178 is disordered; it reads SRSSPSSSLSPGSGGTDSDSSYPPTPTTERS. The region spanning 187–291 is the Calponin-homology (CH) 2 domain; the sequence is RKAIKTLLSW…YVAQFLERFP (105 aa). Disordered regions lie at residues 391–420, 455–545, 585–727, and 758–929; these read STGK…SNSL, KATK…TLLA, STSQ…SPPL, and GEDL…DSSI. Composition is skewed to basic and acidic residues over residues 455-465 and 472-495; these read KATKELSKQDG and VSKE…DKVP. Residues 509 to 529 are compositionally biased toward polar residues; sequence AQPSQDSSFCNGTVESPSSQG. Ser-537 bears the Phosphoserine mark. 3 stretches are compositionally biased toward basic and acidic residues: residues 594–614, 622–651, and 659–669; these read PSSH…AEKP, PRAE…EDQG, and PADKKPKVYEK. Position 679 is a phosphoserine (Ser-679). Thr-710 carries the phosphothreonine modification. The segment covering 711 to 720 has biased composition (basic and acidic residues); sequence LRSHSEEGLD. Phosphoserine is present on Ser-724. Residues 759 to 773 show a composition bias toward basic and acidic residues; it reads EDLKSEDTDLEHPED. The segment covering 780–791 has biased composition (acidic residues); it reads REEEADEDEEEA. Residues 792-801 are compositionally biased toward low complexity; the sequence is QSSQSSCSFS. A compositionally biased stretch (basic and acidic residues) spans 836-849; sequence SHEDHQPKETKENG. Ser-856 carries the post-translational modification Phosphoserine. The segment covering 880–889 has biased composition (basic residues); sequence SKKKEKRKHM. At Ser-925 the chain carries Phosphoserine. A helical; Anchor for type IV membrane protein transmembrane segment spans residues 1027-1047; it reads VIYFILFLWLLVYCLLLFPQL.

In terms of tissue distribution, expressed in testis. Expressed during testis maturation process and in maturing spermatids. In brain, it is expressed in neurons of the hippocampus, cerebral cortex, and thalamus, Purkinje cells, and also in the choroid plexus and ependymal cells. Expressed predominantly in dendrites and cell bodies of the neurons, but not in axons. The level of expression increases during the period of maturation of the mouse brain after birth.

The protein localises to the membrane. It is found in the cytoplasm. The protein is Calmin (Clmn) of Mus musculus (Mouse).